We begin with the raw amino-acid sequence, 454 residues long: tRNA modification GTPase MnmE (454 aa).

(6S)-5-formyl-5,6,7,8-tetrahydrofolate is bound by residues arginine 23, glutamate 80, and lysine 120. The TrmE-type G domain occupies glycine 216–glycine 377. Asparagine 226 lines the K(+) pocket. GTP-binding positions include asparagine 226–serine 231, threonine 245–threonine 251, aspartate 270–glycine 273, and asparagine 335–aspartate 338. Serine 230 is a Mg(2+) binding site. 3 residues coordinate K(+): threonine 245, isoleucine 247, and threonine 250. Threonine 251 provides a ligand contact to Mg(2+). Lysine 454 provides a ligand contact to (6S)-5-formyl-5,6,7,8-tetrahydrofolate.

It belongs to the TRAFAC class TrmE-Era-EngA-EngB-Septin-like GTPase superfamily. TrmE GTPase family. Homodimer. Heterotetramer of two MnmE and two MnmG subunits. K(+) is required as a cofactor.

It is found in the cytoplasm. Functionally, exhibits a very high intrinsic GTPase hydrolysis rate. Involved in the addition of a carboxymethylaminomethyl (cmnm) group at the wobble position (U34) of certain tRNAs, forming tRNA-cmnm(5)s(2)U34. In Sodalis glossinidius (strain morsitans), this protein is tRNA modification GTPase MnmE.